Here is a 423-residue protein sequence, read N- to C-terminus: Putative competence-damage inducible protein (423 aa).

Belongs to the CinA family.

The sequence is that of Putative competence-damage inducible protein from Streptococcus pyogenes serotype M6 (strain ATCC BAA-946 / MGAS10394).